We begin with the raw amino-acid sequence, 555 residues long: Glutamate--tRNA ligase (555 aa).

The 'HIGH' region motif lies at 103–113 (PNPSGPLHIGH).

Belongs to the class-I aminoacyl-tRNA synthetase family. Glutamate--tRNA ligase type 2 subfamily.

It is found in the cytoplasm. The enzyme catalyses tRNA(Glu) + L-glutamate + ATP = L-glutamyl-tRNA(Glu) + AMP + diphosphate. Functionally, catalyzes the attachment of glutamate to tRNA(Glu) in a two-step reaction: glutamate is first activated by ATP to form Glu-AMP and then transferred to the acceptor end of tRNA(Glu). In Methanobrevibacter smithii (strain ATCC 35061 / DSM 861 / OCM 144 / PS), this protein is Glutamate--tRNA ligase.